A 73-amino-acid polypeptide reads, in one-letter code: Toxin Td9 (73 aa).

The signal sequence occupies residues 1–7 (IGMVAEC). The LCN-type CS-alpha/beta domain maps to 8 to 70 (KDGYLVGDDG…IWNSATNSCG (63 aa)). 4 cysteine pairs are disulfide-bonded: Cys18-Cys69, Cys22-Cys44, Cys30-Cys50, and Cys34-Cys52. Lys71 bears the Lysine amide mark.

The protein belongs to the long (4 C-C) scorpion toxin superfamily. Sodium channel inhibitor family. Beta subfamily. As to expression, expressed by the venom gland.

It localises to the secreted. Beta toxins bind voltage-independently at site-4 of sodium channels (Nav) and shift the voltage of activation toward more negative potentials thereby affecting sodium channel activation and promoting spontaneous and repetitive firing. In Tityus discrepans (Venezuelan scorpion), this protein is Toxin Td9.